Here is a 352-residue protein sequence, read N- to C-terminus: UDP-N-acetylglucosamine--N-acetylmuramyl-(pentapeptide) pyrophosphoryl-undecaprenol N-acetylglucosamine transferase (352 aa).

Positions 195 and 287 each coordinate UDP-N-acetyl-alpha-D-glucosamine.

It belongs to the glycosyltransferase 28 family. MurG subfamily.

The protein resides in the cell membrane. It catalyses the reaction Mur2Ac(oyl-L-Ala-gamma-D-Glu-L-Lys-D-Ala-D-Ala)-di-trans,octa-cis-undecaprenyl diphosphate + UDP-N-acetyl-alpha-D-glucosamine = beta-D-GlcNAc-(1-&gt;4)-Mur2Ac(oyl-L-Ala-gamma-D-Glu-L-Lys-D-Ala-D-Ala)-di-trans,octa-cis-undecaprenyl diphosphate + UDP + H(+). Its pathway is cell wall biogenesis; peptidoglycan biosynthesis. Cell wall formation. Catalyzes the transfer of a GlcNAc subunit on undecaprenyl-pyrophosphoryl-MurNAc-pentapeptide (lipid intermediate I) to form undecaprenyl-pyrophosphoryl-MurNAc-(pentapeptide)GlcNAc (lipid intermediate II). The sequence is that of UDP-N-acetylglucosamine--N-acetylmuramyl-(pentapeptide) pyrophosphoryl-undecaprenol N-acetylglucosamine transferase from Streptococcus pneumoniae serotype 19F (strain G54).